A 90-amino-acid chain; its full sequence is Protein LURE 1.5 (90 aa).

Residues 1-19 form the signal peptide; that stretch reads MKLPIIFLTLLIFVSSCTS. 2 cysteine pairs are disulfide-bonded: Cys-58/Cys-75 and Cys-61/Cys-82.

The protein belongs to the DEFL family. As to expression, expressed in the pistil. Detected exclusively in the synergid cells.

Its subcellular location is the secreted. Its function is as follows. Inactive pollen tube attractants guiding pollen tubes to the ovular micropyle. The sequence is that of Protein LURE 1.5 from Arabidopsis thaliana (Mouse-ear cress).